A 279-amino-acid polypeptide reads, in one-letter code: Protoheme IX farnesyltransferase (279 aa).

9 helical membrane-spanning segments follow: residues 5–25 (LILL…AGYL), 33–53 (IAQA…AAAF), 84–103 (LAYS…LLLG), 108–125 (LFVF…TVIL), 133–153 (ILGG…LGAG), 159–179 (AVLI…ALAY), 201–221 (AAVA…MTLY), 222–242 (LAFG…VATI), and 256–276 (AMWK…LALI).

It belongs to the UbiA prenyltransferase family. Protoheme IX farnesyltransferase subfamily.

It localises to the cell membrane. The catalysed reaction is heme b + (2E,6E)-farnesyl diphosphate + H2O = Fe(II)-heme o + diphosphate. It functions in the pathway porphyrin-containing compound metabolism; heme O biosynthesis; heme O from protoheme: step 1/1. Functionally, converts heme B (protoheme IX) to heme O by substitution of the vinyl group on carbon 2 of heme B porphyrin ring with a hydroxyethyl farnesyl side group. The sequence is that of Protoheme IX farnesyltransferase from Pyrobaculum arsenaticum (strain DSM 13514 / JCM 11321 / PZ6).